Consider the following 889-residue polypeptide: Disease resistance protein UNI (889 aa).

Residues 19 to 64 (NCLIGKSYIRTLEKNLRALQREMEDLRAIQHEVQNKVARDEARHQR) adopt a coiled-coil conformation. A disordered region spans residues 131-152 (GNFDEVSQPPPRSEVEERPTQP). The region spanning 137–440 (SQPPPRSEVE…CEGFIGEDQV (304 aa)) is the NB-ARC domain. 179–186 (GMGGVGKT) is a binding site for ATP. 9 LRR repeats span residues 510–532 (WGAV…ESKC), 533–555 (SELT…FIRY), 557–580 (QKLV…ISGL), 581–603 (VSLQ…LKEL), 604–625 (KKLT…GISR), 626–652 (LLSL…LQQL), 653–676 (QNLQ…LAKL), 698–721 (MENL…ESET), and 825–848 (CPKL…EIHM).

It belongs to the disease resistance NB-LRR family. As to quaternary structure, interacts with RPT2A.

Involved in disease resistance via the salicylic acid (SA) signaling pathway. Involved in shoot architecture development via the cytokinin signaling pathway. This chain is Disease resistance protein UNI, found in Arabidopsis thaliana (Mouse-ear cress).